The sequence spans 226 residues: Gap junction beta-2 protein (226 aa).

The stretch at 2–13 (DWSALQTILGGV) is an intramembrane region. Residues 14–20 (NKHSTSI) lie on the Cytoplasmic side of the membrane. Residues 21-40 (GKIWLTVLFIFRIMILVVAA) form a helical membrane-spanning segment. The Extracellular segment spans residues 41 to 73 (KEVWGDEQADFVCNTLQPGCKNVCYDHYFPISH). Ca(2+) contacts are provided by Glu42, Gly45, and Glu47. Cystine bridges form between Cys53-Cys180, Cys60-Cys174, and Cys64-Cys169. The chain crosses the membrane as a helical span at residues 74–94 (IRLWALQLIFVSTPALLVAMH). Over 95–135 (VAYYRHEKKRKFIRGEIKTEFKDIEEIKNQKVRIEGSLWWT) the chain is Cytoplasmic. A helical transmembrane segment spans residues 136-156 (YTGSIFFRVIFEAAFMYVFYV). Residues 157–189 (MYDGFAMQRLVKCNAWPCPNTVDCFVSRPTEKT) lie on the Extracellular side of the membrane. Residues 190–210 (VFTVFMIAVSGICILLNVTEL) traverse the membrane as a helical segment. At 211-226 (CYLLIRFCSGKSKKPV) the chain is on the cytoplasmic side.

The protein belongs to the connexin family. Beta-type (group I) subfamily. A hemichannel or connexon is composed of a hexamer of connexins. A functional gap junction is formed by the apposition of two hemichannels. Forms heteromeric channels with GJB4. Interacts with CNST.

It is found in the cell membrane. The protein resides in the cell junction. It localises to the gap junction. Its function is as follows. Structural component of gap junctions. Gap junctions are dodecameric channels that connect the cytoplasm of adjoining cells. They are formed by the docking of two hexameric hemichannels, one from each cell membrane. Small molecules and ions diffuse from one cell to a neighboring cell via the central pore. This Ovis aries (Sheep) protein is Gap junction beta-2 protein (GJB2).